The chain runs to 142 residues: Holo-[acyl-carrier-protein] synthase (142 aa).

Asp9 and Glu63 together coordinate Mg(2+).

It belongs to the P-Pant transferase superfamily. AcpS family. The cofactor is Mg(2+).

It is found in the cytoplasm. It catalyses the reaction apo-[ACP] + CoA = holo-[ACP] + adenosine 3',5'-bisphosphate + H(+). In terms of biological role, transfers the 4'-phosphopantetheine moiety from coenzyme A to a Ser of acyl-carrier-protein. This chain is Holo-[acyl-carrier-protein] synthase, found in Burkholderia lata (strain ATCC 17760 / DSM 23089 / LMG 22485 / NCIMB 9086 / R18194 / 383).